An 879-amino-acid chain; its full sequence is Alanine--tRNA ligase 1 (879 aa).

Residues H566, H570, C668, and H672 each contribute to the Zn(2+) site.

It belongs to the class-II aminoacyl-tRNA synthetase family. The cofactor is Zn(2+).

It localises to the cytoplasm. It carries out the reaction tRNA(Ala) + L-alanine + ATP = L-alanyl-tRNA(Ala) + AMP + diphosphate. In terms of biological role, catalyzes the attachment of alanine to tRNA(Ala) in a two-step reaction: alanine is first activated by ATP to form Ala-AMP and then transferred to the acceptor end of tRNA(Ala). Also edits incorrectly charged Ser-tRNA(Ala) and Gly-tRNA(Ala) via its editing domain. This is Alanine--tRNA ligase 1 from Lachnoclostridium phytofermentans (strain ATCC 700394 / DSM 18823 / ISDg) (Clostridium phytofermentans).